A 260-amino-acid chain; its full sequence is NAD kinase (260 aa).

D49 (proton acceptor) is an active-site residue. Residues 49-50, 119-120, D149, A157, and 160-165 contribute to the NAD(+) site; these read DG, NE, and TAYNLS.

The protein belongs to the NAD kinase family. It depends on a divalent metal cation as a cofactor.

The protein localises to the cytoplasm. The catalysed reaction is NAD(+) + ATP = ADP + NADP(+) + H(+). Its function is as follows. Involved in the regulation of the intracellular balance of NAD and NADP, and is a key enzyme in the biosynthesis of NADP. Catalyzes specifically the phosphorylation on 2'-hydroxyl of the adenosine moiety of NAD to yield NADP. The protein is NAD kinase of Caulobacter vibrioides (strain ATCC 19089 / CIP 103742 / CB 15) (Caulobacter crescentus).